A 484-amino-acid polypeptide reads, in one-letter code: Glutamate--tRNA ligase (484 aa).

Positions 11–21 match the 'HIGH' region motif; the sequence is PSPTGYLHIGN. The 'KMSKS' region signature appears at 252-256; that stretch reads KLSKR. Lys255 contributes to the ATP binding site.

This sequence belongs to the class-I aminoacyl-tRNA synthetase family. Glutamate--tRNA ligase type 1 subfamily. As to quaternary structure, monomer.

Its subcellular location is the cytoplasm. The enzyme catalyses tRNA(Glu) + L-glutamate + ATP = L-glutamyl-tRNA(Glu) + AMP + diphosphate. In terms of biological role, catalyzes the attachment of glutamate to tRNA(Glu) in a two-step reaction: glutamate is first activated by ATP to form Glu-AMP and then transferred to the acceptor end of tRNA(Glu). The protein is Glutamate--tRNA ligase of Staphylococcus epidermidis (strain ATCC 35984 / DSM 28319 / BCRC 17069 / CCUG 31568 / BM 3577 / RP62A).